The sequence spans 508 residues: ATP synthase subunit alpha, chloroplastic (508 aa).

Residue 170-177 coordinates ATP; the sequence is GDRQTGKT.

This sequence belongs to the ATPase alpha/beta chains family. In terms of assembly, F-type ATPases have 2 components, CF(1) - the catalytic core - and CF(0) - the membrane proton channel. CF(1) has five subunits: alpha(3), beta(3), gamma(1), delta(1), epsilon(1). CF(0) has four main subunits: a, b, b' and c.

It is found in the plastid. It localises to the chloroplast thylakoid membrane. It catalyses the reaction ATP + H2O + 4 H(+)(in) = ADP + phosphate + 5 H(+)(out). Functionally, produces ATP from ADP in the presence of a proton gradient across the membrane. The alpha chain is a regulatory subunit. The protein is ATP synthase subunit alpha, chloroplastic of Helianthus annuus (Common sunflower).